The sequence spans 1822 residues: MDSGMEEEGALPGTLSGCSGLHPVLPSDLDVISDTSGLGNGVLPSMSEEKVSPTRARNMKDFENQITELKKENFNLKLRIYFLEERIQQEFAGPTEHIYKTNIELKVEVESLKRELQEKDQLLVKASKAVESLAERGGSEVQRVKEDARKKVQQVEDLLTKRIHLLEEDVKAAQAELEKAFAGTETEKALRLSLESKLSAMKKMQEGDLEMTLALEEKDRLIEELKLSLKSKEALIQCLKEEKSQMASPDENVSSGELRGLSATLREEKERDAEEWQKERNHFEERIQALQEDLREKEREIATEKKNNLKSYKAIQGLTMALKSKEREVEELDSKIKEVTTDSTKGREDPLKTQIPRFQLREGSEDCEAALVEKEALLAKLHSENVTKSTENHRLLRNVKKVTQELNDLKKEKLRLEQALEEAHQEGNRGARTIHDLRNEVEKLRKEVSEREKAVEKHYKSLPGESKTKFHTQEQVVRSLTGSGSQEDLLLQKSNEKDLEAIQQNCYLMTAEELKFGSDGLITEKCSQQSPDSKLIFSKEKQQSEYEGLTGDLKAEQNIYAHLAKTQDTDSVSNLQAELKEVLALRKQLEQDVLAYRNLQKALQEQLSEIRSREEEPFSFYSDQTSYLSICLEEHNQFQLEHFSQEELKKKVSDLIQLVKDLHTDNQHLKKTIFDLSSVGFQGSDRLELTKQEELVASKEDEDTLKFEADVETPFQSDQHLEQSREIMEDYAEGGCKSGYGRHMDSNILGHDGAQTPGASEEHTLEDELLGLLATLFSKKATPLLESRPDLLKALGALLLERICLAEQGRPGDHLDSKTEKALQQVAVQLRDELGHSFPANSFSKSYNEVKSMWGNWLVKTGDEDTVELKSVSVQTMAIEDTPHGFKPQSKRDAWAEKQEEAIFSTELESEALGEMPGQQATHLSFPSAINPDAEKTGLLIQLKTPELLENLYNLPASPEVVVAQLQGQVLELQRELKEFKTRNKQLHEKLILAEAMMEGLPVPNSALVNVPAAQAVVRTAFQDNPGEQEGPETTQSAGRDKDMDSDQYTSFEIDSEICPPDDLALLPACKENLEDLLGPSSIATYLDSKSQLSVKVSVNGTDQSENINIPDDTEDLKQKIHDLQTELEGYRNIIVQLLKHSQCSEAIITVLCGTEGAQDGLNKPKGHIDEEEMTFSSLHQVRYVKHMKILRPLTPEMIDGKMLESLKQQLVDQEQELQKEQDLNLELFGEIHDLQNKFQDLSPSRYDSLVQSQARELSLQRQQIKDSHGICVIYRQHMSTMIKAFEELLQASDVDSCVAEGFREQLTQCAGLLEQLERLFLHGKSARVEPHPQNELLKGLRTVEGNLPYHHLLPESPEPSASHALSDDEMSEKSFLSRDPKPDSDTEKYPAMASHFPQDLLMEHIQEIRTLRKHLEESIKTNEKLRKQLERQGSETDQGSRNVSACGLALHSSLTSEIHFLRKQNEALSMMLEKGSKDKQKESEKLRESLARKAESLEQLQLEYTSVREENERLQRDIIEKERHNQELTEEVCSSRQELSRVQEEAKSRQQLLSQKDKLLQSLQMELKVYEKLAEEHPRLQQDGSKCPEASDNSFDLFESTQAMAPKSASETPLLSGTDVDSLSCDSTSSATSPTSMPCLVAGHHMWASKSGHHMLGLIEDYDALYKQISWGQTLLAKMDVQTQEALSPTSHKLGPKGSSSVPLSKFLSSMNTAKLVLEKASRLLKLFWRVSVPTNGQCSLHCEQIGEMKAENTKLHKKLFEQEKKLQNTAKLLQQSKHQEKVIFDQLVITHQVLRKARGNLELRPGATRPGASSPSRPGS.

A CM1 motif; interacts with the gTuRC region spans residues 50 to 93; it reads KVSPTRARNMKDFENQITELKKENFNLKLRIYFLEERIQQEFAG. Positions 57–195 are interaction with NCKAP5L; it reads RNMKDFENQI…TEKALRLSLE (139 aa). Phosphoserine is present on residues Ser485 and Ser544. The interval 1022–1046 is disordered; sequence FQDNPGEQEGPETTQSAGRDKDMDS. Thr1195 carries the phosphothreonine modification. The tract at residues 1201 to 1822 is interaction with PCNT and AKAP9; the sequence is GKMLESLKQQ…GASSPSRPGS (622 aa). Residues Ser1243 and Ser1245 each carry the phosphoserine modification. The tract at residues 1350-1391 is disordered; the sequence is YHHLLPESPEPSASHALSDDEMSEKSFLSRDPKPDSDTEKYP. Basic and acidic residues predominate over residues 1372-1389; that stretch reads SEKSFLSRDPKPDSDTEK. Residues Ser1497, Ser1592, and Ser1595 each carry the phosphoserine modification. The tract at residues 1655–1697 is interaction with CDK5R1; it reads HMLGLIEDYDALYKQISWGQTLLAKMDVQTQEALSPTSHKLGP. A required for centrosomal attachment, Golgi targeting and CALM1 interaction region spans residues 1655 to 1822; the sequence is HMLGLIEDYD…GASSPSRPGS (168 aa). Positions 1688 to 1822 are interaction with PCNT; sequence LSPTSHKLGP…GASSPSRPGS (135 aa). Positions 1790 to 1799 are required for centrosomal attachment, Golgi localization and CALM1 interaction; the sequence is VITHQVLRKA. The residue at position 1822 (Ser1822) is a Phosphoserine.

As to quaternary structure, homodimer. Interacts with CDK5R1 (p35 form). CDK5RAP1, CDK5RAP2 and CDK5RAP3 show competitive binding to CDK5R1. May form a complex with CDK5R1 and CDK5. Interacts with pericentrin/PCNT; the interaction is leading to centrosomal and Golgi localization of CDK5RAP2 and PCNT. Interacts with AKAP9; the interaction targets CDK5RAP2 and AKAP9 to Golgi apparatus. Interacts with TUBG1; the interaction is leading to the centrosomal localization of CDK5RAP2 and TUBG1. Interacts with TUBGCP3. Interacts with CALM1. Interacts with CDC20. Interacts with CEP68; degradation of CEP68 in early mitosis leads to removal of CDK5RAP2 from the centrosome which promotes centriole disengagement and subsequent centriole separation. Interacts with NCKAP5L. Interacts with LGALS3BP; this interaction may connect the pericentrosomal complex to the gamma-tubulin ring complex (gTuRC) to promote microtubule assembly and acetylation. Contrary to human, chimpanzee, bovine and dog orthologous proteins, does not interact with EB1/MAPRE1, possibly due to a divergence at the level of the critical residue 939, which is a proline in MAPRE1-binding orthologs and a leucine in mouse and rat. Interacts with CCDC66. Associates (via CM1 motif) with TUBGCP2 of the gTuRC; the interaction plays a role in gTuRC activation. Phosphorylated in vitro by CDK5. In terms of tissue distribution, expressed in testis, thymus, heart and brain.

It is found in the cytoplasm. It localises to the cytoskeleton. Its subcellular location is the microtubule organizing center. The protein resides in the centrosome. The protein localises to the golgi apparatus. Its function is as follows. Potential regulator of CDK5 activity via its interaction with CDK5R1. Negative regulator of centriole disengagement (licensing) which maintains centriole engagement and cohesion. Involved in regulation of mitotic spindle orientation. Plays a role in the spindle checkpoint activation by acting as a transcriptional regulator of both BUBR1 and MAD2 promoter. Together with EB1/MAPRE1, may promote microtubule polymerization, bundle formation, growth and dynamics at the plus ends. Regulates centrosomal maturation by recruitment of the gamma-tubulin ring complex (gTuRC) onto centrosomes. Required for the recruitment of AKAP9 to centrosomes. Plays a role in neurogenesis. Contrary to higher mammalian orthologs, including human, chimpanzee, bovine and dog, does not interact with EB1/MAPRE1, therefore its function in the regulation of microtubule dynamics is unclear. This Mus musculus (Mouse) protein is CDK5 regulatory subunit-associated protein 2 (Cdk5rap2).